The chain runs to 2598 residues: MGSVYDSQSIAIVGLSCRLPGDADNAERFWNLMSEGRSAISSVPADRWNSKGFRDPTGKKRQNTSLTDRAHFVKGDISEFDANFFTISKAEADSMDPQQRIMLEVAYEAFENAGLSMDSLAKSQTGCWVSSFSQDWKEMHFSDPDAAPKYAMSGMQPELLSNRVSYFFDLQGPSMTIETACSGSLVGLHVACQSLRAGDCETALVGGANLFLNQNMFLALSNQSFLAPDGLCKAFDASANGYGRGEGFAAVILKPIEKAIRDGDHIRAVIRGTGTNQDGRTKGLTMPNGHAQESLIRSTYAAAGLDLKDTAYFEAHGTGTQAGDFEELGAISRTVADARQKAGLEDLWVGSAKTNIGHLEAVAGLVGVLKAVLVLENGVIPPNLHFKNPNPRIPFGKWRIKVPTERIQWPSDGIRRVSVNSFGFGGSNAHAILDDADQYLSGRGIIRANGKSHHHHHQHQQQQLNGGNGGSNGVNGTSEVNGTSGVNGTTTAITNGSTHVNGTAATAATAAAQQIIILNSYDQEGLGRQREALLRYAEKQQQQQQQQGGQGGADPEKLLGDLAFTLNQKRSRLPWRTFFTASTLPELSRALEAASTFPAIRSGAATPRIAYVFTGQGAQWAQMGMDLLRFHVFRESVEAADRHLTQIGCPWSAVEELQRGDAESNIHISWYSQTLCTVIQVALVQLLESWNVRPRSVVGHSSGEMGAAFAIGALSREDAWTIAYWRGKLSSELTTIAPTQKGAMMAVGASHAQAQAWVDGLTRGRCVVACVNSPSSVTVSGDESGLDELAAMLKEQGVFARKLKVSTAYHSHHMKAVAEAYLDALKGVRTRTVPAEGGAPQMFTSVSESLVDPAELGPAHWVANLISPVLFSNTVRELARPKGPDDEASGSAVDLMVEIGPHAALRGPVTQILQSHGLPALDYYSVLSRGANSVDTALAVVGELVCRGVPVDLGAVNRAHLTAEQQLQADRRPSLVAELPPYAWNHAKTYWSESRISRELKYRPAPQLGLIGAPMPNFAPNEHQWRGFLRLADAAWIRDHKIQSSVIFPAGGFLAMAVEAAAQLAAAAQQEQPDRVVKGYKLRSVDISSAVRVADDSSVECIIQLRLSPGGAAAAEAAETWWDFSISTSPNAGEALKRNCSGSVAVEFGALAIVDAAQASYASAASACTISQEVDVFYRQLDSVGLGYGPTFQAIKSILHDSRGQGCGVLEITETDSASPKDPDARPHVVHPTTLESLFQMAYAAFGGRDGRVKRALMVTQIDELLVDATIPFAPGSRLLTSASAARQGFREIKADAFMLEAASESPKMAVKGLVCVEMPSASGMGGGGGGGLDADQASYSAMLSKFVWKPALELLSAPEQAKLLEDATRLPEDEAQRLASEATAELHAVKAVLESAQSKKIANLKLRNAAKWISQQLQASGIPGKPAENGAREGGSSSGFTAEVEKVLSGLAEADVLLGSKGSADHLVAQLPGMKMSLEKMYKLVNYMAHANPNLTVLEIVPGGAGVDFSLPLSAKDIPSTIQYTYASPSADNVQQMQERLGGGSGDSALALALAPRFRVLEIEQDLADQGLDPGSFDIVIGCNLLSNAVNVEKTLSQAKSLLTEGGKMALVELNKPSPAALPVLGILCDWWKRRDDGLRRPFTTDMVNESLAGQGFAIELATPDFTDPALQQSSLVLASCQPASAGKESAAQEVVSILVRKDSSEAVNALASQLSQACNGAKTVTWEAGVDFKGQHLISLLEFDTPLLDRLTEEDFGLVKQLITQAASLQWVTAIPEPHASTVMGLARVARFEVPSLRFQTVTLDPSSVLALDRAATLIIQAQKKSTSQDKEFKEVDSVLHVPRVDIDAPLNEQVTRLLLEEDVEPMPLGSGDAARKLCIRNPGMLNTLCFEIDSLPSTVLAEDEVEMQVKASGLSPKDVAICLGQVSDTALGFEASGIVTRVGAGVAQFQAGDKICMMARGAHRTVLRSKSALCQRIPEGMSFEQAAAVPLAHGAVYHALVNIARARSGQKILVAVSDAVVSEAAVQLAKHLGLEAFVTTESQDRTPLIGTKEDYGISDDHIFYSRDPTYVKEITRLTNGAGVDCVLSSVSGEALKHATSCLAPFGTFVDLGAKDVRSSAILDKHPEAMFAAINLERISELRPDMAGRIMDGTFALLREGAIKPVKLLAAYPASDLETAMQALHARSRQDKIVIAYSADQVVPVLHNPRESLRLPGDKTYLIAGGLGGIGRNIANLLVECGARHLAFVSRSGVTSEAQQKLVDNLTQRGAKIAVYRCNIGDAQSLEQTLARCSAEMPPVKGVIHSAVVFRDAVIHNMTYAQWHELMESKLGGSWNLHALTTSYDLDFFLCIGSFMAIIGGLSQSNYAAGGAFQDGLAHMRQSMGLPAATIDLGIVKGFGAVEEQGAVGHTLEWREPFGVDEDAVFALIKKALLGQMDKDGPGVPPQMINTVPTGGMVRESGVGQPYYFEDPRFAIMAAIGTRNADGADGQASVALKEQLAQAESPEEAARLVSAAVAAKVAKLMQVGAEEIDAGKPLHAYGVDSLVAIEYVHWAKKEVAAEITVFDVMASVPISAFASDLAKKGEWGTTAATTKQ.

A Ketosynthase family 3 (KS3) domain is found at 7–435; that stretch reads SQSIAIVGLS…GSNAHAILDD (429 aa). Catalysis depends on for beta-ketoacyl synthase activity residues cysteine 181, histidine 316, and histidine 358. Over residues 450 to 459 the composition is skewed to basic residues; that stretch reads GKSHHHHHQH. Disordered regions lie at residues 450–490 and 537–557; these read GKSH…NGTT and AEKQ…DPEK. Residues 474–490 are compositionally biased toward low complexity; that stretch reads VNGTSEVNGTSGVNGTT. In terms of domain architecture, Malonyl-CoA:ACP transacylase (MAT) spans 611-915; that stretch reads YVFTGQGAQW…RGPVTQILQS (305 aa). The interval 1008–1151 is N-terminal hotdog fold; the sequence is LGLIGAPMPN…GSVAVEFGAL (144 aa). One can recognise a PKS/mFAS DH domain in the interval 1008 to 1325; it reads LGLIGAPMPN…CVEMPSASGM (318 aa). The dehydratase (DH) domain stretch occupies residues 1009-1323; the sequence is GLIGAPMPNF…LVCVEMPSAS (315 aa). Positions 1169–1325 are C-terminal hotdog fold; it reads TISQEVDVFY…CVEMPSASGM (157 aa). The Enoyl reductase (ER) domain maps to 1886–2197; sequence GMLNTLCFEI…ARSRQDKIVI (312 aa). A Ketoreductase (KR) domain is found at 2222–2399; sequence TYLIAGGLGG…AATIDLGIVK (178 aa). Positions 2510–2587 constitute a Carrier domain; the sequence is EAARLVSAAV…AFASDLAKKG (78 aa). Position 2547 is an O-(pantetheine 4'-phosphoryl)serine (serine 2547).

It depends on pantetheine 4'-phosphate as a cofactor.

It functions in the pathway secondary metabolite biosynthesis. Functionally, partially reducing polyketide synthase; part of the gene cluster that mediates the biosynthesis of menisporopsin A, a bioactive macrocyclic polylactone. The biosynthesis of menisporopsin A is performed by a reducing (man1) and a non-reducing (men2) polyketide synthase that catalyze the formation of each menisporopsin A subunits, while the esterification and cyclolactonization activities are probably peformed by the unusual thioesterase domain of men2. First, a reduced diketide intermediate, 3-hydroxybutyryl-S-ACP is produced by men1 and transferred to men2; this is followed by a second reduced diketide which is further elongated using 3 units of malonyl-coA to form a reduced pentaketide. The cyclization of this intermediate by the PT domain forms the second subunit, 2,4-dihydroxy-6-(2-hydroxy-n-propyl)benzoyl-S-ACP. The TE domain of men2 then esterifies the secondary hydroxyl group on the side chain of the second subunit with the acyl-TE of the first subunit to form the first ester intermediate. This process occurs iteratively to form a linear tetraester intermediate. The final subunit is formed by a similar process, except that an extra malonyl-CoA is required in an additional elongation step to form a reduced hexaketide intermediate, and the carbonyl group next to the secondary hydroxyl group is reduced by a trans-acting ketoreductase. Again, the PT domain catalyzes cyclization to form the largest subunit, 2,4-dihydroxy-6-(2,4-dihydroxy-n-pentyl) benzoyl-S-ACP. Then the linear pentaester intermediate is formed. In this step, if the intermediate transfer rate is slow, intra- molecular cyclization involving the secondary hydroxyl group of the pentaester intermediate may occur to form menisporopsin B. Alternatively, transfer of the pentaester intermediate to the TE domain would allow cyclolactonization to be catalyzed by the TE to form menisporopsin A. This chain is Partially reducing polyketide synthase men1, found in Menisporopsis theobromae.